The chain runs to 205 residues: GTP cyclohydrolase-2 (205 aa).

49-53 contacts GTP; the sequence is RIHSE. Residues Cys-54, Cys-65, and Cys-67 each coordinate Zn(2+). GTP is bound by residues Gln-70, 92–94, and Thr-114; that span reads EGR. Residue Asp-126 is the Proton acceptor of the active site. Residue Arg-128 is the Nucleophile of the active site. Residues Thr-149 and Lys-154 each contribute to the GTP site.

The protein belongs to the GTP cyclohydrolase II family. The cofactor is Zn(2+).

It carries out the reaction GTP + 4 H2O = 2,5-diamino-6-hydroxy-4-(5-phosphoribosylamino)-pyrimidine + formate + 2 phosphate + 3 H(+). Its pathway is cofactor biosynthesis; riboflavin biosynthesis; 5-amino-6-(D-ribitylamino)uracil from GTP: step 1/4. In terms of biological role, catalyzes the conversion of GTP to 2,5-diamino-6-ribosylamino-4(3H)-pyrimidinone 5'-phosphate (DARP), formate and pyrophosphate. This Shewanella loihica (strain ATCC BAA-1088 / PV-4) protein is GTP cyclohydrolase-2.